We begin with the raw amino-acid sequence, 387 residues long: MNMKKGVSQLTLQTLSLVAGFMAWSIISPLMPFISQDVDISPGQISVILAIPVILGSVLRVPFGYLTNIVGAKWVFFWSFIVLLLPIFLLGQAQSPGMLMLSGFFLGIGGAIFSVGVTSVPKYFSKDKVGLANGIYGVGNIGTAVSSFCAPVLAGAIGWQNTVRSYLIILSIFAILMFFLGDKNEPKVKIPLMAQVKDLSKNYKLYYLSLWYFITFGAFVAFGIFLPNFLVDHFSIDKVDAGIRSGIFIALATFLRPVGGVIGDKFNAVQALIIDFVIMIIGALILSLSSHIVLFTIGCLAISICAGIGNGLIFKLAPSYFSKEAGSANGIVSMMGGLGGFFPPLVITFVTSITGSSHLAFFFLAIFGVIALITMIHLNKKEKAIRI.

12 helical membrane-spanning segments follow: residues 14–34, 45–65, 69–89, 97–117, 137–157, 161–181, 211–231, 246–266, 268–288, 294–314, 330–350, and 358–378; these read TLSLVAGFMAWSIISPLMPFI, ISVILAIPVILGSVLRVPFGY, IVGAKWVFFWSFIVLLLPIFL, GMLMLSGFFLGIGGAIFSVGV, GVGNIGTAVSSFCAPVLAGAI, NTVRSYLIILSIFAILMFFLG, WYFITFGAFVAFGIFLPNFLV, GIFIALATFLRPVGGVIGDKF, AVQALIIDFVIMIIGALILSL, LFTIGCLAISICAGIGNGLIF, GIVSMMGGLGGFFPPLVITFV, and HLAFFFLAIFGVIALITMIHL.

It belongs to the major facilitator superfamily. Nitrate/nitrite porter (TC 2.A.1.8) family.

Its subcellular location is the cell membrane. In terms of biological role, probably required for nitrate uptake under anoxic conditions. Also possibly involved in excretion of nitrite produced by the dissimilatory reduction of nitrate. This chain is Probable nitrate transporter NarT (narT), found in Staphylococcus epidermidis (strain ATCC 35984 / DSM 28319 / BCRC 17069 / CCUG 31568 / BM 3577 / RP62A).